The sequence spans 306 residues: MWFKNLLTYRLTQEVPFEPEALEAALASKPARPCASQELTTYGFVAPFGKGEDAPLVHVSGEYLLIAARKEERILPSSVVNDAVKEKVEEIETEQMRKVYKKERDQIKDEIIQAFLPRAFIRRSMIFAAIAPRLGVILVNSASAKRAEDLLSTLREVMGSLPVRPATVKVAPVATMTDWVKSQQAAEGFHVLDECELRDTAEDGGIVRCKRQDLTGEEIQLHLSTGKVVTQLALAWQDKLSFILDDKMVIKRLKFEELLQEQAEQDGGDEAAQQFDASFQLMMMTFAEFLPVLFEALGGEEIPQGV.

It belongs to the RdgC family.

It is found in the cytoplasm. It localises to the nucleoid. In terms of biological role, may be involved in recombination. The chain is Recombination-associated protein RdgC from Pseudomonas putida (strain GB-1).